Consider the following 414-residue polypeptide: MGSDVRDMNLLPPVSSLSGNSSCNMPVSSSAQWAPVLDFPPGAPYSSLTPHSFIKQEPTWNPDPHEDQCLSAFTVHFSGQFTGTAGACRYGPFGAPTPSQATTGQARMFSNAPYLSNCLDNQQGMRNQGYSAVAFDGTPSYGHTPSHHTSQFTNHSFKHEDPLSQQTSLGEQQYSVPPPVYGCHTPTDTCTGSQALLLRTPYNSDNLYPMTSQLDCMTWNQMNLGSSLKSHGTSYENDSHSSPMLYNCGGQYRIHTHGVFRGIQDVRRVPGVTPAIVRSTEANEKRPFMCAYPGCNKRYFKLSHLQMHSRKHTGEKPYQCDFKDCERRFSRSDQLKRHQRRHTGIKPFQCKTCQRKFSRSDHLKTHTRTHTGKTSEKPFSCRWPSCQKKFARSDELVRHHNMHQRNMTKLQLAL.

Glycyl lysine isopeptide (Lys-Gly) (interchain with G-Cter in SUMO) cross-links involve residues Lys55 and Lys158. A 9aaTAD motif is present at residues 217 to 225; sequence MTWNQMNLG. 3 C2H2-type zinc fingers span residues 288–312, 318–342, and 348–370; these read FMCA…SRKH, YQCD…QRRH, and FQCK…TRTH. Important for interaction with target DNA regions lie at residues 332–346 and 358–366; these read SDQL…TGIK and SRSDHLKTH. The KTS motif motif lies at 373 to 375; sequence KTS. The C2H2-type 4 zinc-finger motif lies at 379 to 403; sequence FSCRWPSCQKKFARSDELVRHHNMH.

This sequence belongs to the EGR C2H2-type zinc-finger protein family. Expressed around the pronephric anlage and in the pronephros; expression is restricted to the splanchnic mesoderm (the site where the glomus forms) from tailbud stages, and the glomus of early tadpoles. Not expressed in the pronephric tubules or pronephric duct. In tadpoles (stage 38-39), additional expression begins in the heart. Also expressed in the adult kidney (mesonephros).

The protein resides in the nucleus. Its subcellular location is the cytoplasm. The protein localises to the nucleus speckle. Functionally, transcription factor required for development of the vascular component of the pronephric kidney, the glomus; may repress tubule-specific gene expression in the portion of the pronephros fated to form the glomus. Recognizes and binds to the DNA sequence 5'-GCG(T/G)GGGCG-3'. Inhibits Wnt-signaling during embryonic development. Function may be isoform-specific: the isoform containing the KTS motif is less effective in inhibiting wnt signaling. In Xenopus laevis (African clawed frog), this protein is Wilms tumor protein homolog A (wt1-a).